A 216-amino-acid chain; its full sequence is Somatotropin (216 aa).

A signal peptide spans 1–26 (MAAGPRNSVLLAFALLCLPWPQEVGT). Residue histidine 45 participates in Zn(2+) binding. Residues cysteine 78 and cysteine 189 are joined by a disulfide bond. Phosphoserine is present on serine 131. Glutamate 198 contributes to the Zn(2+) binding site. A disulfide bridge connects residues cysteine 206 and cysteine 214.

Belongs to the somatotropin/prolactin family.

The protein localises to the secreted. In terms of biological role, plays an important role in growth control. Its major role in stimulating body growth is to stimulate the liver and other tissues to secrete IGF1. It stimulates both the differentiation and proliferation of myoblasts. It also stimulates amino acid uptake and protein synthesis in muscle and other tissues. This is Somatotropin (GH1) from Felis catus (Cat).